Here is a 181-residue protein sequence, read N- to C-terminus: Adenine phosphoribosyltransferase (181 aa).

Belongs to the purine/pyrimidine phosphoribosyltransferase family. As to quaternary structure, homodimer.

The protein localises to the cytoplasm. It carries out the reaction AMP + diphosphate = 5-phospho-alpha-D-ribose 1-diphosphate + adenine. It functions in the pathway purine metabolism; AMP biosynthesis via salvage pathway; AMP from adenine: step 1/1. Catalyzes a salvage reaction resulting in the formation of AMP, that is energically less costly than de novo synthesis. In Methylobacterium radiotolerans (strain ATCC 27329 / DSM 1819 / JCM 2831 / NBRC 15690 / NCIMB 10815 / 0-1), this protein is Adenine phosphoribosyltransferase.